We begin with the raw amino-acid sequence, 620 residues long: Chaperone protein HscA homolog (620 aa).

It belongs to the heat shock protein 70 family.

Chaperone involved in the maturation of iron-sulfur cluster-containing proteins. Has a low intrinsic ATPase activity which is markedly stimulated by HscB. The chain is Chaperone protein HscA homolog from Janthinobacterium sp. (strain Marseille) (Minibacterium massiliensis).